The primary structure comprises 137 residues: Acidic phospholipase A2 beta-bungarotoxin A6 chain (137 aa).

The signal sequence occupies residues 1-9 (AVCVSLLGA). Positions 10-17 (ANIPPQHL) are excised as a propeptide. Disulfide bonds link cysteine 44/cysteine 136, cysteine 46/cysteine 62, cysteine 61/cysteine 117, cysteine 68/cysteine 110, cysteine 78/cysteine 103, and cysteine 96/cysteine 108. Positions 45, 47, and 49 each coordinate Ca(2+). The active site involves histidine 65. A Ca(2+)-binding site is contributed by aspartate 66. Aspartate 111 is an active-site residue.

The protein belongs to the phospholipase A2 family. Group I subfamily. D49 sub-subfamily. As to quaternary structure, heterodimer; disulfide-linked. The A chains have phospholipase A2 activity and the B chains show homology with the basic protease inhibitors. Requires Ca(2+) as cofactor. In terms of tissue distribution, expressed by the venom gland.

The protein resides in the secreted. The enzyme catalyses a 1,2-diacyl-sn-glycero-3-phosphocholine + H2O = a 1-acyl-sn-glycero-3-phosphocholine + a fatty acid + H(+). Snake venom phospholipase A2 (PLA2) that inhibits neuromuscular transmission by blocking acetylcholine release from the nerve termini. PLA2 catalyzes the calcium-dependent hydrolysis of the 2-acyl groups in 3-sn-phosphoglycerides. The sequence is that of Acidic phospholipase A2 beta-bungarotoxin A6 chain from Bungarus multicinctus (Many-banded krait).